The following is a 964-amino-acid chain: Syndetin (964 aa).

The residue at position 1 (M1) is an N-acetylmethionine. The disordered stretch occupies residues 1–25; it reads MQKIKSLMTRQGLKSPPESLNDLGA. S15 is modified (phosphoserine). Coiled coils occupy residues 81-107 and 216-244; these read LNLQELEEYRDKLKQQQSAVSKKVADL and YSCISELNSKLQDTLEQIEEQLDVALSKI. Phosphoserine is present on residues S494, S498, S559, and S561. The disordered stretch occupies residues 532 to 563; it reads DEETEDVLASNGYESDEQEKSAYQDYDSDSDV. K963 is covalently cross-linked (Glycyl lysine isopeptide (Lys-Gly) (interchain with G-Cter in SUMO1); alternate). A Glycyl lysine isopeptide (Lys-Gly) (interchain with G-Cter in SUMO2); alternate cross-link involves residue K963.

Belongs to the syndetin family. As to quaternary structure, component of the endosome-associated retrograde protein (EARP) complex, composed of VPS51, VPS52, VPS53 and VPS50/Syndetin. The EARP complex interacts with EIPR1. Interacts with VPS51 and VPS53 in an EIPR1-independent manner.

It is found in the recycling endosome. It localises to the membrane. In terms of biological role, acts as a component of the EARP complex that is involved in endocytic recycling. The EARP complex associates with Rab4-positive endosomes and promotes recycling of internalized transferrin receptor (TFRC) to the plasma membrane. Within the EARP complex, required to tether the complex to recycling endosomes. Not involved in retrograde transport from early and late endosomes to the trans-Golgi network (TGN). The sequence is that of Syndetin from Mus musculus (Mouse).